We begin with the raw amino-acid sequence, 436 residues long: uncharacterized protein (436 aa).

The chain crosses the membrane as a helical span at residues 1–21 (MILLQVICTIWTCLFIPLLNA). BNR repeat units follow at residues 57 to 68 (WISSDSGENWEA) and 101 to 112 (YVTDDRGKSWRA). Residue asparagine 157 is glycosylated (N-linked (GlcNAc...) asparagine). 2 BNR repeats span residues 229 to 240 (ALSTDGGKTFKK) and 394 to 405 (KISVDNGLTWSN).

Its subcellular location is the membrane. This is an uncharacterized protein from Saccharomyces cerevisiae (strain ATCC 204508 / S288c) (Baker's yeast).